We begin with the raw amino-acid sequence, 438 residues long: Enolase (438 aa).

(2R)-2-phosphoglycerate is bound at residue Q164. E206 (proton donor) is an active-site residue. 3 residues coordinate Mg(2+): D243, E289, and D316. Residues K341, R370, S371, and K392 each coordinate (2R)-2-phosphoglycerate. Catalysis depends on K341, which acts as the Proton acceptor.

It belongs to the enolase family. Mg(2+) is required as a cofactor.

It localises to the cytoplasm. Its subcellular location is the secreted. It is found in the cell surface. The catalysed reaction is (2R)-2-phosphoglycerate = phosphoenolpyruvate + H2O. Its pathway is carbohydrate degradation; glycolysis; pyruvate from D-glyceraldehyde 3-phosphate: step 4/5. Catalyzes the reversible conversion of 2-phosphoglycerate (2-PG) into phosphoenolpyruvate (PEP). It is essential for the degradation of carbohydrates via glycolysis. The polypeptide is Enolase (Borrelia garinii subsp. bavariensis (strain ATCC BAA-2496 / DSM 23469 / PBi) (Borreliella bavariensis)).